A 303-amino-acid polypeptide reads, in one-letter code: Putative AraC-like transcription regulator (303 aa).

Positions 202 to 300 (ASALTFLHRD…GMNPGDYRKH (99 aa)) constitute an HTH araC/xylS-type domain. 2 consecutive DNA-binding regions (H-T-H motif) follow at residues 219 to 240 (AELASAAAVSRSTLAARFKATV) and 267 to 290 (LAAIAHSVGYGSESALSVAFKRVL).

This is Putative AraC-like transcription regulator from Streptomyces antibioticus.